The following is a 1186-amino-acid chain: DNA-directed RNA polymerase subunit beta (1186 aa).

The disordered stretch occupies residues 1149 to 1186; sequence KEEDDDPSTSSDDLGFNIGARPDAAAKEDQVAEEPEFQ.

The protein belongs to the RNA polymerase beta chain family. The RNAP catalytic core consists of 2 alpha, 1 beta, 1 beta' and 1 omega subunit. When a sigma factor is associated with the core the holoenzyme is formed, which can initiate transcription.

The catalysed reaction is RNA(n) + a ribonucleoside 5'-triphosphate = RNA(n+1) + diphosphate. Its function is as follows. DNA-dependent RNA polymerase catalyzes the transcription of DNA into RNA using the four ribonucleoside triphosphates as substrates. This Bifidobacterium adolescentis (strain ATCC 15703 / DSM 20083 / NCTC 11814 / E194a) protein is DNA-directed RNA polymerase subunit beta.